A 467-amino-acid chain; its full sequence is Glutamate--tRNA ligase (467 aa).

The 'HIGH' region signature appears at 9–19; that stretch reads PSPTGYLHIGG. Residues 237–241 carry the 'KMSKS' region motif; the sequence is KLSKR. Lys-240 lines the ATP pocket.

Belongs to the class-I aminoacyl-tRNA synthetase family. Glutamate--tRNA ligase type 1 subfamily. In terms of assembly, monomer.

It localises to the cytoplasm. It catalyses the reaction tRNA(Glu) + L-glutamate + ATP = L-glutamyl-tRNA(Glu) + AMP + diphosphate. Catalyzes the attachment of glutamate to tRNA(Glu) in a two-step reaction: glutamate is first activated by ATP to form Glu-AMP and then transferred to the acceptor end of tRNA(Glu). The protein is Glutamate--tRNA ligase of Xanthomonas axonopodis pv. citri (strain 306).